A 279-amino-acid polypeptide reads, in one-letter code: Undecaprenyl-diphosphatase (279 aa).

Transmembrane regions (helical) follow at residues 2 to 22, 44 to 64, 85 to 105, 113 to 133, 163 to 183, 188 to 208, 223 to 243, and 255 to 275; these read LIIELLKAIFFGIIEGITEWL, AFIEMFNIVIQLGAIIAVMLI, WQLWLKVVIACIPSILIAVPL, FYFMVPIAIALIVYGIAFIWI, VLSIVPGTSRSGATILGAIIL, TVAADFTFFLAIPTMFGYSGL, AQVLILLVASLTAFVVSLLAI, and FTIFGKYRIVLGSLLLIYSFF.

This sequence belongs to the UppP family.

It localises to the cell membrane. The enzyme catalyses di-trans,octa-cis-undecaprenyl diphosphate + H2O = di-trans,octa-cis-undecaprenyl phosphate + phosphate + H(+). In terms of biological role, catalyzes the dephosphorylation of undecaprenyl diphosphate (UPP). Confers resistance to bacitracin. This is Undecaprenyl-diphosphatase from Streptococcus pyogenes serotype M28 (strain MGAS6180).